Here is a 311-residue protein sequence, read N- to C-terminus: GTPase Era (311 aa).

In terms of domain architecture, Era-type G spans 16–188 (HAGFVAIVGK…REQLLEVLPE (173 aa)). Residues 24–31 (GKPNVGKS) are G1. 24–31 (GKPNVGKS) provides a ligand contact to GTP. The interval 50–54 (QTTRR) is G2. A G3 region spans residues 71–74 (DTPG). Residues 71 to 75 (DTPGL) and 133 to 136 (NKTD) each bind GTP. The segment at 133 to 136 (NKTD) is G4. Residues 166–168 (LSA) form a G5 region. Positions 219-296 (LRDELPYAVA…YLGLEVIVIP (78 aa)) constitute a KH type-2 domain.

The protein belongs to the TRAFAC class TrmE-Era-EngA-EngB-Septin-like GTPase superfamily. Era GTPase family. As to quaternary structure, monomer.

The protein localises to the cytoplasm. It localises to the cell membrane. Functionally, an essential GTPase that binds both GDP and GTP, with rapid nucleotide exchange. Plays a role in 16S rRNA processing and 30S ribosomal subunit biogenesis and possibly also in cell cycle regulation and energy metabolism. This chain is GTPase Era, found in Deinococcus radiodurans (strain ATCC 13939 / DSM 20539 / JCM 16871 / CCUG 27074 / LMG 4051 / NBRC 15346 / NCIMB 9279 / VKM B-1422 / R1).